Consider the following 411-residue polypeptide: Acetylornithine aminotransferase (411 aa).

Residues 107–108 and F141 each bind pyridoxal 5'-phosphate; that span reads GT. R144 lines the N(2)-acetyl-L-ornithine pocket. 227-230 serves as a coordination point for pyridoxal 5'-phosphate; sequence DEIQ. Position 256 is an N6-(pyridoxal phosphate)lysine (K256). T284 lines the N(2)-acetyl-L-ornithine pocket. A pyridoxal 5'-phosphate-binding site is contributed by T285.

Belongs to the class-III pyridoxal-phosphate-dependent aminotransferase family. ArgD subfamily. In terms of assembly, homodimer. Requires pyridoxal 5'-phosphate as cofactor.

The protein localises to the cytoplasm. The enzyme catalyses N(2)-acetyl-L-ornithine + 2-oxoglutarate = N-acetyl-L-glutamate 5-semialdehyde + L-glutamate. It functions in the pathway amino-acid biosynthesis; L-arginine biosynthesis; N(2)-acetyl-L-ornithine from L-glutamate: step 4/4. The polypeptide is Acetylornithine aminotransferase (Xylella fastidiosa (strain 9a5c)).